The chain runs to 200 residues: NADH-quinone oxidoreductase subunit C (200 aa).

It belongs to the complex I 30 kDa subunit family. As to quaternary structure, NDH-1 is composed of 14 different subunits. Subunits NuoB, C, D, E, F, and G constitute the peripheral sector of the complex.

Its subcellular location is the cell inner membrane. It carries out the reaction a quinone + NADH + 5 H(+)(in) = a quinol + NAD(+) + 4 H(+)(out). Functionally, NDH-1 shuttles electrons from NADH, via FMN and iron-sulfur (Fe-S) centers, to quinones in the respiratory chain. The immediate electron acceptor for the enzyme in this species is believed to be ubiquinone. Couples the redox reaction to proton translocation (for every two electrons transferred, four hydrogen ions are translocated across the cytoplasmic membrane), and thus conserves the redox energy in a proton gradient. This is NADH-quinone oxidoreductase subunit C from Chelativorans sp. (strain BNC1).